A 386-amino-acid chain; its full sequence is Bifunctional enzyme IspD/IspF (386 aa).

Positions 1-230 are 2-C-methyl-D-erythritol 4-phosphate cytidylyltransferase; it reads MNSVPSLPGQ…LEEQSMSVIP (230 aa). The 2-C-methyl-D-erythritol 2,4-cyclodiphosphate synthase stretch occupies residues 231–386; it reads RTGMGFDVHR…AQAVATVVSG (156 aa). A divalent metal cation-binding residues include Asp-237 and His-239. 4-CDP-2-C-methyl-D-erythritol 2-phosphate-binding positions include 237-239 and 263-264; these read DVH and HS. Residue His-271 coordinates a divalent metal cation. Residues 285–287, 361–364, and Arg-371 contribute to the 4-CDP-2-C-methyl-D-erythritol 2-phosphate site; these read DIG and TTTE.

In the N-terminal section; belongs to the IspD/TarI cytidylyltransferase family. IspD subfamily. This sequence in the C-terminal section; belongs to the IspF family. The cofactor is a divalent metal cation.

It catalyses the reaction 2-C-methyl-D-erythritol 4-phosphate + CTP + H(+) = 4-CDP-2-C-methyl-D-erythritol + diphosphate. The enzyme catalyses 4-CDP-2-C-methyl-D-erythritol 2-phosphate = 2-C-methyl-D-erythritol 2,4-cyclic diphosphate + CMP. The protein operates within isoprenoid biosynthesis; isopentenyl diphosphate biosynthesis via DXP pathway; isopentenyl diphosphate from 1-deoxy-D-xylulose 5-phosphate: step 2/6. It functions in the pathway isoprenoid biosynthesis; isopentenyl diphosphate biosynthesis via DXP pathway; isopentenyl diphosphate from 1-deoxy-D-xylulose 5-phosphate: step 4/6. In terms of biological role, bifunctional enzyme that catalyzes the formation of 4-diphosphocytidyl-2-C-methyl-D-erythritol from CTP and 2-C-methyl-D-erythritol 4-phosphate (MEP) (IspD), and catalyzes the conversion of 4-diphosphocytidyl-2-C-methyl-D-erythritol 2-phosphate (CDP-ME2P) to 2-C-methyl-D-erythritol 2,4-cyclodiphosphate (ME-CPP) with a corresponding release of cytidine 5-monophosphate (CMP) (IspF). In Novosphingobium aromaticivorans (strain ATCC 700278 / DSM 12444 / CCUG 56034 / CIP 105152 / NBRC 16084 / F199), this protein is Bifunctional enzyme IspD/IspF.